Reading from the N-terminus, the 303-residue chain is Hydroxyacylglutathione hydrolase, mitochondrial (303 aa).

Zn(2+)-binding residues include His-97, His-99, Asp-101, His-102, His-153, and Asp-177. Residues 186 to 188, 216 to 218, and 292 to 295 contribute to the substrate site; these read KFF, HEY, and RKEK. His-216 serves as a coordination point for Zn(2+).

It belongs to the metallo-beta-lactamase superfamily. Glyoxalase II family. In terms of assembly, monomer. It depends on Zn(2+) as a cofactor.

Its subcellular location is the mitochondrion matrix. It localises to the cytoplasm. It catalyses the reaction an S-(2-hydroxyacyl)glutathione + H2O = a 2-hydroxy carboxylate + glutathione + H(+). The catalysed reaction is (R)-S-lactoylglutathione + H2O = (R)-lactate + glutathione + H(+). Functionally, thiolesterase that catalyzes the hydrolysis of S-D-lactoyl-glutathione to form glutathione and D-lactic acid. The polypeptide is Hydroxyacylglutathione hydrolase, mitochondrial (hagh) (Danio rerio (Zebrafish)).